A 224-amino-acid polypeptide reads, in one-letter code: 7-cyano-7-deazaguanine synthase (224 aa).

An ATP-binding site is contributed by Leu9–Leu19. Cys188, Cys198, Cys201, and Cys204 together coordinate Zn(2+).

Belongs to the QueC family. It depends on Zn(2+) as a cofactor.

It catalyses the reaction 7-carboxy-7-deazaguanine + NH4(+) + ATP = 7-cyano-7-deazaguanine + ADP + phosphate + H2O + H(+). Its pathway is purine metabolism; 7-cyano-7-deazaguanine biosynthesis. Its function is as follows. Catalyzes the ATP-dependent conversion of 7-carboxy-7-deazaguanine (CDG) to 7-cyano-7-deazaguanine (preQ(0)). This chain is 7-cyano-7-deazaguanine synthase, found in Thiobacillus denitrificans (strain ATCC 25259 / T1).